The following is a 1183-amino-acid chain: DNA-directed RNA polymerase subunit beta (1183 aa).

It belongs to the RNA polymerase beta chain family. As to quaternary structure, the RNAP catalytic core consists of 2 alpha, 1 beta, 1 beta' and 1 omega subunit. When a sigma factor is associated with the core the holoenzyme is formed, which can initiate transcription.

The enzyme catalyses RNA(n) + a ribonucleoside 5'-triphosphate = RNA(n+1) + diphosphate. Its function is as follows. DNA-dependent RNA polymerase catalyzes the transcription of DNA into RNA using the four ribonucleoside triphosphates as substrates. The protein is DNA-directed RNA polymerase subunit beta of Staphylococcus aureus (strain COL).